We begin with the raw amino-acid sequence, 573 residues long: Sulfite reductase [NADPH] hemoprotein beta-component (573 aa).

The [4Fe-4S] cluster site is built by Cys438, Cys444, Cys483, and Cys487. A siroheme-binding site is contributed by Cys487.

This sequence belongs to the nitrite and sulfite reductase 4Fe-4S domain family. Alpha(8)-beta(8). The alpha component is a flavoprotein, the beta component is a hemoprotein. It depends on siroheme as a cofactor. The cofactor is [4Fe-4S] cluster.

It carries out the reaction hydrogen sulfide + 3 NADP(+) + 3 H2O = sulfite + 3 NADPH + 4 H(+). Its pathway is sulfur metabolism; hydrogen sulfide biosynthesis; hydrogen sulfide from sulfite (NADPH route): step 1/1. Functionally, component of the sulfite reductase complex that catalyzes the 6-electron reduction of sulfite to sulfide. This is one of several activities required for the biosynthesis of L-cysteine from sulfate. In Shouchella clausii (strain KSM-K16) (Alkalihalobacillus clausii), this protein is Sulfite reductase [NADPH] hemoprotein beta-component.